A 267-amino-acid polypeptide reads, in one-letter code: 2-keto-3-deoxy-L-rhamnonate aldolase (267 aa).

The active-site Proton acceptor is His49. Gln151 contributes to the substrate binding site. Position 153 (Glu153) interacts with Mg(2+). Residues Ala178 and Asp179 each contribute to the substrate site. Asp179 is a Mg(2+) binding site.

The protein belongs to the HpcH/HpaI aldolase family. KDR aldolase subfamily. As to quaternary structure, homohexamer. Mg(2+) serves as cofactor.

It carries out the reaction 2-dehydro-3-deoxy-L-rhamnonate = (S)-lactaldehyde + pyruvate. In terms of biological role, catalyzes the reversible retro-aldol cleavage of 2-keto-3-deoxy-L-rhamnonate (KDR) to pyruvate and lactaldehyde. This chain is 2-keto-3-deoxy-L-rhamnonate aldolase, found in Salmonella dublin (strain CT_02021853).